A 32-amino-acid polypeptide reads, in one-letter code: Cytochrome b6-f complex subunit 7 (32 aa).

Residues 9–29 (AILSSVLVLVGLAVGFLLLKV) traverse the membrane as a helical segment.

The protein belongs to the PetM family. As to quaternary structure, the 4 large subunits of the cytochrome b6-f complex are cytochrome b6, subunit IV (17 kDa polypeptide, PetD), cytochrome f and the Rieske protein, while the 4 small subunits are PetG, PetL, PetM and PetN. The complex functions as a dimer.

Its subcellular location is the plastid. The protein localises to the chloroplast thylakoid membrane. Component of the cytochrome b6-f complex, which mediates electron transfer between photosystem II (PSII) and photosystem I (PSI), cyclic electron flow around PSI, and state transitions. The chain is Cytochrome b6-f complex subunit 7 from Porphyra purpurea (Red seaweed).